The chain runs to 587 residues: Phosphomethylpyrimidine synthase (587 aa).

Substrate contacts are provided by residues asparagine 218, methionine 247, tyrosine 276, histidine 312, 332 to 334 (SRG), 373 to 376 (DGLR), and glutamate 412. Histidine 416 serves as a coordination point for Zn(2+). Position 439 (tyrosine 439) interacts with substrate. Histidine 480 provides a ligand contact to Zn(2+). Cysteine 560, cysteine 563, and cysteine 568 together coordinate [4Fe-4S] cluster.

This sequence belongs to the ThiC family. [4Fe-4S] cluster serves as cofactor.

The enzyme catalyses 5-amino-1-(5-phospho-beta-D-ribosyl)imidazole + S-adenosyl-L-methionine = 4-amino-2-methyl-5-(phosphooxymethyl)pyrimidine + CO + 5'-deoxyadenosine + formate + L-methionine + 3 H(+). It participates in cofactor biosynthesis; thiamine diphosphate biosynthesis. Functionally, catalyzes the synthesis of the hydroxymethylpyrimidine phosphate (HMP-P) moiety of thiamine from aminoimidazole ribotide (AIR) in a radical S-adenosyl-L-methionine (SAM)-dependent reaction. This is Phosphomethylpyrimidine synthase from Porphyromonas gingivalis (strain ATCC 33277 / DSM 20709 / CIP 103683 / JCM 12257 / NCTC 11834 / 2561).